The sequence spans 269 residues: Eukaryotic translation initiation factor 3 subunit G-1 (269 aa).

The region spanning 188–266 (AAIRISNLSE…LILSVEWSKP (79 aa)) is the RRM domain.

Belongs to the eIF-3 subunit G family. As to quaternary structure, component of the eukaryotic translation initiation factor 3 (eIF-3) complex. The eIF-3 complex interacts with pix.

Its subcellular location is the cytoplasm. Functionally, RNA-binding component of the eukaryotic translation initiation factor 3 (eIF-3) complex, which is involved in protein synthesis of a specialized repertoire of mRNAs and, together with other initiation factors, stimulates binding of mRNA and methionyl-tRNAi to the 40S ribosome. The eIF-3 complex specifically targets and initiates translation of a subset of mRNAs involved in cell proliferation. This subunit can bind 18S rRNA. The chain is Eukaryotic translation initiation factor 3 subunit G-1 from Drosophila erecta (Fruit fly).